A 62-amino-acid chain; its full sequence is High-potential iron-sulfur protein (62 aa).

4 residues coordinate [4Fe-4S] cluster: cysteine 22, cysteine 25, cysteine 40, and cysteine 55.

This sequence belongs to the high-potential iron-sulfur protein (HiPIP) family. As to quaternary structure, homodimer.

Functionally, specific class of high-redox-potential 4Fe-4S ferredoxins. Functions in anaerobic electron transport in most purple and in some other photosynthetic bacteria and in at least one genus (Paracoccus) of halophilic, denitrifying bacteria. The sequence is that of High-potential iron-sulfur protein (hip) from Rhodocyclus tenuis (Rhodospirillum tenue).